A 556-amino-acid chain; its full sequence is Jerky protein homolog (556 aa).

In terms of domain architecture, HTH psq-type spans 11 to 62 (RGEKRKRVVLTLKEKIDICTRLEKGESRKALMQEYNVGMSTLYDIRAHKAQL). DNA-binding regions (H-T-H motif) lie at residues 38 to 58 (RKAL…IRAH) and 110 to 142 (PMLI…FKAR). The 73-residue stretch at 77 to 149 (QRRTLHTPKL…KARHGIKKLD (73 aa)) folds into the HTH CENPB-type domain. The DDE-1 domain occupies 213–382 (KDRLTVLMCA…VPSHVFRRAW (170 aa)). Ser-414 is subject to Phosphoserine. The disordered stretch occupies residues 439 to 482 (SWGVAGREAEGGRPPAATSPAEVVWSSEKTPKADQDGRGDPGEG). The segment covering 467–479 (KTPKADQDGRGDP) has biased composition (basic and acidic residues).

Belongs to the tigger transposable element derived protein family. As to expression, expressed ubiquitously.

The protein localises to the nucleus. In terms of biological role, may bind DNA. The chain is Jerky protein homolog from Homo sapiens (Human).